Consider the following 263-residue polypeptide: MESSNQPNVLIFDSGVGGLSVFQEINKRLPEVNYYYLFDNQAYPYGELSQETLLARVEALVVKMTQQFAIDLVVIACNTASTIVLPALRAKLPIPVVGVVPAIKPASLLANRAVGLIATPATVTRQYTHDLIRDFAHEKEVELLGSTRLVDIAEEKLRGRQVDQQELAMILKPMKHKVDVAVLGCTHFPLLKEEIQQVLGDEIILVDSGEAIARRVQSLLHQLSPQSTKTPWRIFSTAQPWDEAALNGSLKTMGFNAIELYPL.

Residues 13–14 and 45–46 contribute to the substrate site; these read DS and YG. C77 acts as the Proton donor/acceptor in catalysis. Residue 78 to 79 coordinates substrate; sequence NT. The active-site Proton donor/acceptor is the C185. 186–187 lines the substrate pocket; it reads TH.

This sequence belongs to the aspartate/glutamate racemases family.

It carries out the reaction L-glutamate = D-glutamate. It functions in the pathway cell wall biogenesis; peptidoglycan biosynthesis. Functionally, provides the (R)-glutamate required for cell wall biosynthesis. The sequence is that of Glutamate racemase from Vibrio vulnificus (strain YJ016).